Reading from the N-terminus, the 188-residue chain is MSRLRIFADSNPTTPHFDSRDGEQIATELRKIGVTFERWHASQPVEPGASPEQVMAAYRADIDRISAERGFKTVDVVSIAPDNPKREEMRAKFLDEHFHKEDEVRFFVAGSGLFTLHVDAQVYEIECVKDDLIAVPDSTLHWFDMGPEPHFVAIRFFTEPDGWVGHFTGTEIAKQFPRYAPEKPPKAS.

Positions 1-20 are disordered; that stretch reads MSRLRIFADSNPTTPHFDSR. Residues His-97, His-99, Glu-103, and His-141 each contribute to the Fe(2+) site. 4 residues coordinate Ni(2+): His-97, His-99, Glu-103, and His-141.

It belongs to the acireductone dioxygenase (ARD) family. As to quaternary structure, monomer. It depends on Fe(2+) as a cofactor. Requires Ni(2+) as cofactor.

It catalyses the reaction 1,2-dihydroxy-5-(methylsulfanyl)pent-1-en-3-one + O2 = 3-(methylsulfanyl)propanoate + CO + formate + 2 H(+). The enzyme catalyses 1,2-dihydroxy-5-(methylsulfanyl)pent-1-en-3-one + O2 = 4-methylsulfanyl-2-oxobutanoate + formate + 2 H(+). It participates in amino-acid biosynthesis; L-methionine biosynthesis via salvage pathway; L-methionine from S-methyl-5-thio-alpha-D-ribose 1-phosphate: step 5/6. Catalyzes 2 different reactions between oxygen and the acireductone 1,2-dihydroxy-3-keto-5-methylthiopentene (DHK-MTPene) depending upon the metal bound in the active site. Fe-containing acireductone dioxygenase (Fe-ARD) produces formate and 2-keto-4-methylthiobutyrate (KMTB), the alpha-ketoacid precursor of methionine in the methionine recycle pathway. Ni-containing acireductone dioxygenase (Ni-ARD) produces methylthiopropionate, carbon monoxide and formate, and does not lie on the methionine recycle pathway. The sequence is that of Acireductone dioxygenase from Xanthomonas campestris pv. campestris (strain 8004).